A 302-amino-acid polypeptide reads, in one-letter code: Heme A synthase (302 aa).

Topologically, residues 1 to 8 (MFRKQNLK) are cytoplasmic. Residues 9-29 (WLGVLATIIMTFVQLGGALVT) traverse the membrane as a helical segment. The Extracellular segment spans residues 30-67 (KTGSEDGCGSSWPLCNGALLPENLPIQTIIELSHRAVS). A disulfide bridge links C37 with C44. E60 is a catalytic residue. H63 contacts heme o. The chain crosses the membrane as a helical span at residues 68–88 (AISLIVVLWLVITAWKNIGYI). At 89–93 (KEIKP) the chain is on the cytoplasmic side. A helical membrane pass occupies residues 94–114 (LSIISVGFLLVQALVGAAAVI). Over 115–125 (WQQNPYVLALH) the chain is Extracellular. A heme o-binding site is contributed by H125. A helical transmembrane segment spans residues 126 to 146 (FGISLISFSSVFLMTLIIFSI). Topologically, residues 147–161 (DKKYEADILFIHKPL) are cytoplasmic. A helical membrane pass occupies residues 162 to 182 (RILTWLMAIIVYLTIYTGALV). Residues 183-215 (RHTKSSLAYGAWPIPFDDIVPHNAHDWVQFSHR) are Extracellular-facing. H214 is a heme b binding site. A helical transmembrane segment spans residues 216 to 236 (GMALITFIWIMITFIHAIKNY). The Cytoplasmic segment spans residues 237–244 (SDNRTVRY). A helical membrane pass occupies residues 245-265 (GYTASFILVILQVITGALSVI). The Extracellular portion of the chain corresponds to 266-270 (TNVNL). The helical transmembrane segment at 271–291 (IIALFHALFITYLFGMIAYFI) threads the bilayer. Residue H276 participates in heme b binding. Residues 292 to 302 (LLMLRTTRSQK) lie on the Cytoplasmic side of the membrane.

This sequence belongs to the COX15/CtaA family. Type 1 subfamily. Interacts with CtaB. The cofactor is heme b.

Its subcellular location is the cell membrane. It catalyses the reaction Fe(II)-heme o + 2 A + H2O = Fe(II)-heme a + 2 AH2. It participates in porphyrin-containing compound metabolism; heme A biosynthesis; heme A from heme O: step 1/1. Its function is as follows. Catalyzes the conversion of heme O to heme A by two successive hydroxylations of the methyl group at C8. The first hydroxylation forms heme I, the second hydroxylation results in an unstable dihydroxymethyl group, which spontaneously dehydrates, resulting in the formyl group of heme A. This Staphylococcus epidermidis (strain ATCC 35984 / DSM 28319 / BCRC 17069 / CCUG 31568 / BM 3577 / RP62A) protein is Heme A synthase.